Here is a 316-residue protein sequence, read N- to C-terminus: Ribosomal RNA small subunit methyltransferase H (316 aa).

S-adenosyl-L-methionine-binding positions include 35–37 (AGH), Asp55, Phe84, Asp105, and Gln112.

Belongs to the methyltransferase superfamily. RsmH family.

Its subcellular location is the cytoplasm. The catalysed reaction is cytidine(1402) in 16S rRNA + S-adenosyl-L-methionine = N(4)-methylcytidine(1402) in 16S rRNA + S-adenosyl-L-homocysteine + H(+). Its function is as follows. Specifically methylates the N4 position of cytidine in position 1402 (C1402) of 16S rRNA. The polypeptide is Ribosomal RNA small subunit methyltransferase H (Streptococcus pneumoniae (strain JJA)).